The sequence spans 118 residues: UPF0134 protein MPN_287 (118 aa).

Belongs to the UPF0134 family.

The polypeptide is UPF0134 protein MPN_287 (Mycoplasma pneumoniae (strain ATCC 29342 / M129 / Subtype 1) (Mycoplasmoides pneumoniae)).